Here is a 368-residue protein sequence, read N- to C-terminus: Isocitrate dehydrogenase [NAD] subunit 2, mitochondrial (368 aa).

Residues 1–14 (MFRQSIVKQSCRFL) constitute a mitochondrion transit peptide. 4 residues coordinate substrate: R118, R128, R149, and D236. Positions 236, 262, and 266 each coordinate Mg(2+).

Belongs to the isocitrate and isopropylmalate dehydrogenases family. Octamer of two non-identical subunits IDH1 and IDH2. The cofactor is Mg(2+). Requires Mn(2+) as cofactor.

It localises to the mitochondrion. It catalyses the reaction D-threo-isocitrate + NAD(+) = 2-oxoglutarate + CO2 + NADH. Its function is as follows. Performs an essential role in the oxidative function of the citric acid cycle. In Kluyveromyces lactis (strain ATCC 8585 / CBS 2359 / DSM 70799 / NBRC 1267 / NRRL Y-1140 / WM37) (Yeast), this protein is Isocitrate dehydrogenase [NAD] subunit 2, mitochondrial (IDH2).